Reading from the N-terminus, the 326-residue chain is Phospho-N-acetylmuramoyl-pentapeptide-transferase (326 aa).

A run of 9 helical transmembrane segments spans residues 3 to 23 (ISIS…PAFI), 51 to 71 (TMGG…LALF), 79 to 99 (VGMI…DDFL), 115 to 135 (LALQ…GGDM), 138 to 158 (VFSY…FWLV), 169 to 189 (GIDG…GVIA), 195 to 215 (MDIL…FVFN), 221 to 243 (VFMG…MALH), and 306 to 326 (FFFW…LYLM).

It belongs to the glycosyltransferase 4 family. MraY subfamily. It depends on Mg(2+) as a cofactor.

It is found in the cell membrane. The enzyme catalyses UDP-N-acetyl-alpha-D-muramoyl-L-alanyl-gamma-D-glutamyl-L-lysyl-D-alanyl-D-alanine + di-trans,octa-cis-undecaprenyl phosphate = Mur2Ac(oyl-L-Ala-gamma-D-Glu-L-Lys-D-Ala-D-Ala)-di-trans,octa-cis-undecaprenyl diphosphate + UMP. Its pathway is cell wall biogenesis; peptidoglycan biosynthesis. Catalyzes the initial step of the lipid cycle reactions in the biosynthesis of the cell wall peptidoglycan: transfers peptidoglycan precursor phospho-MurNAc-pentapeptide from UDP-MurNAc-pentapeptide onto the lipid carrier undecaprenyl phosphate, yielding undecaprenyl-pyrophosphoryl-MurNAc-pentapeptide, known as lipid I. The polypeptide is Phospho-N-acetylmuramoyl-pentapeptide-transferase (Streptococcus pneumoniae (strain ATCC 700669 / Spain 23F-1)).